Reading from the N-terminus, the 2523-residue chain is Non-reducing polyketide synthase Preu3 (2523 aa).

Residues 58 to 247 (LQSLASERRA…KILAMTGSFH (190 aa)) are N-terminal acylcarrier protein transacylase domain (SAT). The Ketosynthase family 3 (KS3) domain occupies 373 to 792 (DNAVAVVGMA…GSNGAMIVCQ (420 aa)). Residues Cys-539, His-674, and His-715 each act as for beta-ketoacyl synthase activity in the active site. The tract at residues 900 to 1207 (CFGGQVKAFV…KAFGSLADAT (308 aa)) is malonyl-CoA:ACP transacylase (MAT) domain. Residue Ser-986 is the For acyl/malonyl transferase activity of the active site. Residues 1271–1398 (HELLTFSSFE…GLVAFGGTVE (128 aa)) form an N-terminal hotdog fold region. The PKS/mFAS DH domain maps to 1271–1573 (HELLTFSSFE…FTRVTVPGLR (303 aa)). Positions 1301 to 1568 (LVKGHAVVAQ…ALGCRFTRVT (268 aa)) are product template (PT) domain. Residue His-1305 is the Proton acceptor; for dehydratase activity of the active site. Residues 1421–1573 (ECDALRGSAT…FTRVTVPGLR (153 aa)) are C-terminal hotdog fold. Asp-1483 (proton donor; for dehydratase activity) is an active-site residue. Residues 1579–1601 (ANGDARAQERPSGSRISPSPLAP) form a disordered region. One can recognise a Carrier domain in the interval 1639–1713 (VDYLAQVKAL…KLAEYLAKTL (75 aa)). The residue at position 1673 (Ser-1673) is an O-(pantetheine 4'-phosphoryl)serine. The disordered stretch occupies residues 1735 to 1757 (DAEQSSDESPYDSTDDSASGYGD). Acidic residues predominate over residues 1738 to 1749 (QSSDESPYDSTD). The methyltransferase (CMeT) domain stretch occupies residues 1986–2085 (LEIGGGTGGT…MRQLLSSEGF (100 aa)). The interval 2218–2520 (LILHGGGHVL…RALEWLVEQC (303 aa)) is thioesterase (TE) domain.

It depends on pantetheine 4'-phosphate as a cofactor.

The catalysed reaction is 3 malonyl-CoA + acetyl-CoA + S-adenosyl-L-methionine + H(+) = 3-methylorsellinate + S-adenosyl-L-homocysteine + 3 CO2 + 4 CoA. In terms of biological role, non-reducing polyketide synthase; part of a gene cluster that mediates the biosynthesis of a yet unidentified natural product. The first step in the pathway is performed by Preu3 that condenses one acetyl-CoA starter unit with 3 malonyl-CoA units. Preu3 also catalyzes one methylation step to produce 3-methylorsellinate, an intermediate that exhibits significant antibacterial activities against methicillin-resistant Staphylococcus aureus, multidrug-resistant Enterococcus faecalis, multidrug-resistant Enterococcus faecium, and multidrug-resistant Staphylococcus epidermidis. The protein is Non-reducing polyketide synthase Preu3 of Preussia isomera (Coprophilous fungus).